The primary structure comprises 483 residues: Sphingomyelin phosphodiesterase 5 (483 aa).

Positions 1–20 (MSLPDISRRRSPVPQEDWPL) are disordered. A helical transmembrane segment spans residues 80-100 (VLLPLVVVGLPLALVGLALWL). Glutamate 209 lines the Mg(2+) pocket. The active-site Proton acceptor is the histidine 471.

It belongs to the neutral sphingomyelinase family. Requires Mg(2+) as cofactor. The cofactor is Mn(2+). In terms of tissue distribution, highly expressed in testis, pancreas, epididymis, and brain.

It localises to the mitochondrion inner membrane. Its subcellular location is the endoplasmic reticulum membrane. The enzyme catalyses a sphingomyelin + H2O = phosphocholine + an N-acylsphing-4-enine + H(+). It carries out the reaction N-(hexadecanoyl)-sphing-4-enine-1-phosphocholine + H2O = N-hexadecanoylsphing-4-enine + phosphocholine + H(+). Its pathway is lipid metabolism; sphingolipid metabolism. Activated by anionic phospholipids, specially cardiolipin and phosphatidylserine. Functionally, catalyzes the hydrolysis of membrane sphingomyelin to form phosphorylcholine and ceramide. The protein is Sphingomyelin phosphodiesterase 5 of Mus musculus (Mouse).